A 536-amino-acid chain; its full sequence is Multicopper oxidase terE (536 aa).

The segment at 1 to 21 (MHWHGLSQSTAPFSDGSPQAS) is disordered. 3 consecutive Plastocyanin-like domains span residues 1 to 67 (MHWH…VEEK), 79 to 238 (ERIL…LSYN), and 354 to 488 (TVQK…VWMM). Cu cation is bound by residues His2, His4, His48, and His50. Position 397 (His397) interacts with Cu cation.

Belongs to the multicopper oxidase family.

Its pathway is secondary metabolite biosynthesis. Its function is as follows. Multicopper oxidase; part of the gene cluster that mediates the biosynthesis of terrein, a fungal metabolite with ecological, antimicrobial, antiproliferative, and antioxidative activities. The first step in the pathway is performed by the polyketide synthase terA that produces 4-hydroxy-6-methylpyranon (4-HMP), orsellinic acid (OA), and 2,3-dehydro-6-hydroxymellein (2,3-dehydro-6-HM) by condensing acetyl-CoA with two, three, or four malonyl-CoA units, respectively. 4-HMP and OA are not pathway intermediates, but are rather shunt or side products. 2,3-dehydro-6-HM is further converted to 6-hydroxymellein (6-HM) by the 6-hydroxymellein synthase terB. The monooxygenases terC and terD, the multicopper oxidase terE and the Kelch-like protein terF are then involved in the transformation of 6-HM to terrein. Even if they are co-regulated with the other terrein cluster genes, terH and terI seem to be dispensable for terrein production; whereas one or both of the 2 transporters terG and terJ are probably required for efficient secretion of metabolites. This chain is Multicopper oxidase terE, found in Aspergillus terreus (strain NIH 2624 / FGSC A1156).